A 132-amino-acid chain; its full sequence is Protein LEKR1 (132 aa).

Residues 37-116 (FKAMEEKVKA…KKQLSHLQDE (80 aa)) are a coiled coil.

This chain is Protein LEKR1 (LEKR1), found in Homo sapiens (Human).